The sequence spans 459 residues: Paired box protein Pax-8 (459 aa).

The segment at residues 9 to 135 (GHGGLNQLGG…SSINRIIRTK (127 aa)) is a DNA-binding region (paired). A PAI subdomain region spans residues 12 to 68 (GLNQLGGAFVNGRPLPEVVRQRIVDLAHQGVRPCDISRQLRVSHGCVSKILGRYYET). The RED subdomain stretch occupies residues 87-135 (KVVEKIGDYKRQNPTMFAWEIRDRLLAEGVCDNDTVPSVSSINRIIRTK). Over residues 159 to 182 (LIPSSAVTPPESPQSDSLGSTYSI) the composition is skewed to polar residues. The disordered stretch occupies residues 159–223 (LIPSSAVTPP…QSSSSGPRKH (65 aa)). The residue at position 305 (S305) is a Phosphoserine.

In terms of assembly, interacts with WWTR1.

It localises to the nucleus. Functionally, thought to encode a transcription factor. It may have a role in kidney cell differentiation. May play a regulatory role in mammalian development. This Canis lupus familiaris (Dog) protein is Paired box protein Pax-8 (PAX8).